Here is a 330-residue protein sequence, read N- to C-terminus: Class III chitinase ARB_03514 (330 aa).

Positions 1-22 (MSSVKNILSFVALFAGVKTAYA) are cleaved as a signal peptide. The GH18 domain occupies 23–314 (GLNSPGHNNV…SAVKGALSAG (292 aa)). Residues N61 and N135 are each glycosylated (N-linked (GlcNAc...) asparagine). E155 acts as the Proton donor in catalysis. N-linked (GlcNAc...) asparagine glycans are attached at residues N278 and N302.

The protein belongs to the glycosyl hydrolase 18 family. Chitinase class III subfamily. In terms of assembly, monomer.

It localises to the secreted. The catalysed reaction is Random endo-hydrolysis of N-acetyl-beta-D-glucosaminide (1-&gt;4)-beta-linkages in chitin and chitodextrins.. Its function is as follows. Secreted chitinase involved in the degradation of chitin, a component of the cell walls of fungi and exoskeletal elements of some animals (including worms and arthropods). Plays a morphogenetic role during apical growth, cell division and differentiation (cell wall morphogenesis). This is Class III chitinase ARB_03514 from Arthroderma benhamiae (strain ATCC MYA-4681 / CBS 112371) (Trichophyton mentagrophytes).